Consider the following 495-residue polypeptide: Aspartyl/glutamyl-tRNA(Asn/Gln) amidotransferase subunit B (495 aa).

It belongs to the GatB/GatE family. GatB subfamily. In terms of assembly, heterotrimer of A, B and C subunits.

It carries out the reaction L-glutamyl-tRNA(Gln) + L-glutamine + ATP + H2O = L-glutaminyl-tRNA(Gln) + L-glutamate + ADP + phosphate + H(+). It catalyses the reaction L-aspartyl-tRNA(Asn) + L-glutamine + ATP + H2O = L-asparaginyl-tRNA(Asn) + L-glutamate + ADP + phosphate + 2 H(+). Its function is as follows. Allows the formation of correctly charged Asn-tRNA(Asn) or Gln-tRNA(Gln) through the transamidation of misacylated Asp-tRNA(Asn) or Glu-tRNA(Gln) in organisms which lack either or both of asparaginyl-tRNA or glutaminyl-tRNA synthetases. The reaction takes place in the presence of glutamine and ATP through an activated phospho-Asp-tRNA(Asn) or phospho-Glu-tRNA(Gln). This chain is Aspartyl/glutamyl-tRNA(Asn/Gln) amidotransferase subunit B, found in Crocosphaera subtropica (strain ATCC 51142 / BH68) (Cyanothece sp. (strain ATCC 51142)).